Here is a 2332-residue protein sequence, read N- to C-terminus: Genome polyprotein (2332 aa).

Residues 1-201 enclose the Peptidase C28 domain; it reads MNTTDCFIAL…WKAKVQRKLK (201 aa). At 1-1480 the chain is on the cytoplasmic side; that stretch reads MNTTDCFIAL…SFVKRAFKRL (1480 aa). Active-site for leader protease activity residues include Cys-51, His-148, and Asp-163. Disordered stretches follow at residues 197 to 218 and 238 to 265; these read QRKLKGAGQSSPATGSQNQSGN and QLGDNAISGGSNEGSTDTTSTHTTNTQN. A lipid anchor (N-myristoyl glycine; by host) is attached at Gly-202. Polar residues-rich tracts occupy residues 204-218 and 238-251; these read GQSSPATGSQNQSGN and QLGDNAISGGSNEG. Residues 252–265 are compositionally biased toward low complexity; it reads STDTTSTHTTNTQN. Residues Cys-406 and Cys-858 are joined by a disulfide bond. An antigenic epitope region spans residues 788 to 796; the sequence is ALLRASTYY. A Cell attachment site motif is present at residues 869–871; the sequence is RGD. Positions 1189–1353 constitute an SF3 helicase domain; that stretch reads NVHIANLCKV…DGYKINSKLD (165 aa). Position 1217-1224 (1217-1224) interacts with ATP; sequence GKSGQGKS. Residues 1481–1501 lie within the membrane without spanning it; that stretch reads KENFEIVALCLTLLANIVIMI. Topologically, residues 1502–2332 are cytoplasmic; it reads RETRKRQKMV…RWVNAVCGDA (831 aa). The segment covering 1529-1538 has biased composition (basic and acidic residues); it reads KTLDEAEKSP. Positions 1529 to 1584 are disordered; it reads KTLDEAEKSPLETSGASTVGFRERTLPGQKACDDVNSEPAQPVEEQPQAEGPYAGP. O-(5'-phospho-RNA)-tyrosine is present on residues Tyr-1581, Tyr-1604, and Tyr-1628. The Peptidase C3 domain maps to 1652 to 1848; it reads APPTDLQKMV…YCSCVSRSML (197 aa). His-1695 functions as the For protease 3C activity; Proton donor/acceptor in the catalytic mechanism. Residues Asp-1733 and Cys-1812 each act as for protease 3C activity in the active site. Short sequence motifs (nuclear localization signal) lie at residues 1878–1886 and 1879–1886; these read MRKTKLAPT and RKTKLAPT. The RdRp catalytic domain maps to 2096 to 2214; it reads RNVWDVDYSA…ASDYDLDFEA (119 aa). Asp-2200 serves as the catalytic For RdRp activity.

This sequence belongs to the picornaviruses polyprotein family. In terms of assembly, interacts with host ISG15. As to quaternary structure, interacts (via R-G-D motif) with host ITGAV/ITGB6. Interacts with host MAVS; this interaction inhibits binding of host TRAF3 to MAVS, thereby suppressing interferon-mediated responses. Forms homooligomers. In terms of assembly, homohexamer. Interacts with host VIM. Interacts with host BECN1. As to quaternary structure, interacts with host DCTN3. Interacts with RNA-dependent RNA polymerase; this interaction allows 3B-1 to binds 2 polymerases and act as a primer. It also allows the recruitment of the RNA-dependent RNA polymerase to host membranes. In terms of assembly, interacts with RNA-dependent RNA polymerase; this interaction allows 3B-2 to act as a primer. As to quaternary structure, interacts with RNA-dependent RNA polymerase; this interaction allows 3B-3 to act as a primer. Interacts with 3B-1; this interaction allows 3B-1 to binds 2 polymerases and act as a primer. It also allows the recruitment of the RNA-dependent RNA polymerase to host membranes. Interacts with 3B-2; this interaction allows 3B-2 to act as a primer. Interacts with 3B-3; this interaction allows 3B-3 to act as a primer. Post-translationally, removes six residues from its own C-terminus, generating sLb(pro). Specific enzymatic cleavages in vivo by the viral proteases yield a variety of precursors and mature proteins. The polyprotein seems to be cotranslationally cleaved at the 2A/2B junction by a ribosomal skip from one codon to the next without formation of a peptide bond. This process would release the L-P1-2A peptide from the translational complex. In terms of processing, during virion maturation, immature virions are rendered infectious following cleavage of VP0 into VP4 and VP2. This maturation seems to be an autocatalytic event triggered by the presence of RNA in the capsid and is followed by a conformational change of the particle. Post-translationally, myristoylation is required during RNA encapsidation and formation of the mature virus particle. Uridylylated by the polymerase and covalently linked to the 5'-end of genomic RNA. These uridylylated forms act as a nucleotide-peptide primer for the polymerase. In terms of processing, the disulfide bond between VP1 and VP2 occurs after release of virus from the host cell.

It localises to the host nucleus. It is found in the host cytoplasm. The protein localises to the virion. The protein resides in the host endoplasmic reticulum membrane. Its subcellular location is the host cytoplasmic vesicle membrane. The enzyme catalyses Autocatalytically cleaves itself from the polyprotein of the foot-and-mouth disease virus by hydrolysis of a Lys-|-Gly bond, but then cleaves host cell initiation factor eIF-4G at bonds -Gly-|-Arg- and -Lys-|-Arg-.. It catalyses the reaction a ribonucleoside 5'-triphosphate + H2O = a ribonucleoside 5'-diphosphate + phosphate + H(+). It carries out the reaction RNA(n) + a ribonucleoside 5'-triphosphate = RNA(n+1) + diphosphate. The catalysed reaction is Selective cleavage of Gln-|-Gly bond in the poliovirus polyprotein. In other picornavirus reactions Glu may be substituted for Gln, and Ser or Thr for Gly.. Its function is as follows. Autocatalytically cleaves itself from the polyprotein at the L/VP0 junction. Also cleaves the host translation initiation factors EIF4G1 and EIF4G3, in order to shut off the capped cellular mRNA transcription. Plays a role in counteracting host innate antiviral response using diverse mechanisms. Possesses a deubiquitinase activity acting on both 'Lys-48' and 'Lys-63'-linked polyubiquitin chains. In turn, inhibits the ubiquitination and subsequent activation of key signaling molecules of type I IFN response such as host RIGI, TBK1, TRAF3 and TRAF6. Inhibits host NF-kappa-B activity by inducing a decrease in RELA mRNA levels. Cleaves a peptide bond in the C-terminus of host ISG15, resulting in the damaging of this modifier that can no longer be attached to target proteins. Also cleaves host G3BP1 and G3BP2 in order to inhibit cytoplasmic stress granules assembly. In terms of biological role, lies on the inner surface of the capsid shell. After binding to the host receptor, the capsid undergoes conformational changes. Capsid protein VP4 is released, capsid protein VP1 N-terminus is externalized, and together, they shape a pore in the host membrane through which the viral genome is translocated into the host cell cytoplasm. After genome has been released, the channel shrinks. Forms an icosahedral capsid of pseudo T=3 symmetry with capsid proteins VP1 and VP3. The capsid is composed of 60 copies of each capsid protein organized in the form of twelve pentamers and encloses the viral positive strand RNA genome. Upon acidifcation in the endosome, dissociates into pentamers. Functionally, forms an icosahedral capsid of pseudo T=3 symmetry with capsid proteins VP2 and VP3. The capsid is composed of 60 copies of each capsid protein organized in the form of twelve pentamers and encloses the viral positive strand RNA genome. Mediates cell entry by attachment to an integrin receptor, usually host ITGAV/ITGB6, via a conserved arginine-glycine-aspartic acid (R-G-D) motif. In addition, targets host MAVS to suppress type I IFN pathway. Upon acidifcation in the endosome, dissociates into pentamers. Its function is as follows. Forms an icosahedral capsid of pseudo T=3 symmetry with capsid proteins VP0 and VP3. The capsid is composed of 60 copies of each capsid protein organized in the form of twelve pentamers and encloses the viral positive strand RNA genome. Upon acidifcation in the endosome, dissociates into pentamers. In terms of biological role, mediates self-processing of the polyprotein by a translational effect termed 'ribosome skipping'. Mechanistically, 2A-mediated cleavage occurs between the C-terminal glycine and the proline of the downstream protein 2B. In the case of foot-and-mouth disease virus, the 2A oligopeptide is post-translationally 'trimmed' from the C-terminus of the upstream protein 1D by 3C proteinase. Plays an essential role in the virus replication cycle by acting as a viroporin. Creates a pore in the host endoplasmic reticulum and as a consequence releases Ca2+ in the cytoplasm of infected cell. In turn, high levels of cytoplasmic calcium may trigger membrane trafficking and transport of viral ER-associated proteins to viroplasms, sites of viral genome replication. Functionally, associates with and induces structural rearrangements of intracellular membranes. Triggers host autophagy by interacting with host BECN1 and thereby promotes viral replication. Participates in viral replication and interacts with host DHX9. Displays RNA-binding, nucleotide binding and NTPase activities. May play a role in virion morphogenesis and viral RNA encapsidation by interacting with the capsid protein VP3. Its function is as follows. Plays important roles in virus replication, virulence and host range. Cooperates with host DDX56 to inhibit IRF3 nuclear translocation and subsequent type I interferon production. In terms of biological role, covalently linked to the 5'-end of both the positive-strand and negative-strand genomic RNAs. Acts as a genome-linked replication primer. Cysteine protease that generates mature viral proteins from the precursor polyprotein. In addition to its proteolytic activity, binds to viral RNA and thus influences viral genome replication. RNA and substrate bind cooperatively to the protease. Functionally, RNA-directed RNA polymerase 3D-POL replicates genomic and antigenomic RNA by recognizing replications specific signals. Covalently attaches UMP to a tyrosine of VPg, which is used to prime RNA synthesis. The positive stranded RNA genome is first replicated at virus induced membranous vesicles, creating a dsRNA genomic replication form. This dsRNA is then used as template to synthesize positive stranded RNA genomes. ss(+)RNA genomes are either translated, replicated or encapsidated. The chain is Genome polyprotein from Bos taurus (Bovine).